The chain runs to 187 residues: Large ribosomal subunit protein uL22 (187 aa).

A disordered region spans residues 161–187; sequence APTDDAPAKKKLSKKKLARQKEKMMRE. Residues 169 to 178 show a composition bias toward basic residues; it reads KKKLSKKKLA.

The protein belongs to the universal ribosomal protein uL22 family.

The protein is Large ribosomal subunit protein uL22 (RpL17) of Bombyx mori (Silk moth).